We begin with the raw amino-acid sequence, 281 residues long: Leukocyte antigen CD37 (281 aa).

Residues 1-17 (MSAQESCLSLIKYFLFV) are Cytoplasmic-facing. Residues 18–38 (FNLFFFVLGGLIFCFGTWILI) form a helical membrane-spanning segment. Over 39–59 (DKTSFVSFVGLSFVPLQTWSK) the chain is Extracellular. Residues 60–74 (VLSVSGVLTMALALL) form a helical membrane-spanning segment. The Cytoplasmic portion of the chain corresponds to 75 to 85 (GCVGALKELRC). Residues 86–111 (LLGLYFGMLLLLFATQITLGILISTQ) traverse the membrane as a helical segment. Residues 112 to 241 (RVRLERRVQE…RSLQKWLHNN (130 aa)) are Extracellular-facing. N-linked (GlcNAc...) asparagine glycans are attached at residues asparagine 170, asparagine 183, and asparagine 188. The chain crosses the membrane as a helical span at residues 242 to 266 (IISIVGICLGVGLLELGFMTLSIFL). Residues 267–281 (CRNLDHVYDRLARYR) lie on the Cytoplasmic side of the membrane.

It belongs to the tetraspanin (TM4SF) family. In terms of assembly, interacts with SCIMP. Interacts with SOCS3. Interacts with DECTIN1/CLEC7A. Post-translationally, tyrosine phosphorylated; leading to activation of downstream signaling pathways. As to expression, B-lymphocytes.

The protein localises to the cell membrane. Its function is as follows. Structural component of specialized membrane microdomains known as tetraspanin-enriched microdomains (TERMs), which act as platforms for receptor clustering and signaling. Participates thereby in diverse biological functions such as cell signal transduction, adhesion, migration and protein trafficking. Upon ligand binding, two signaling pathways are activated, one acting through phosphorylation by LYN leading to cell death or a survival pathway with activation of GSK3B. Plays an essential role essential for clustering of integrin ITGA4/ITGB1 and promotes its mobility in the plasma membrane of B-cells. In turn, participates in ITGA4/ITGB1 integrin-mediated antiapoptotic signaling through AKT. Plays also a role in the migration of dendritic cells and neutrophils to draining lymph nodes, as well as in their integrin-mediated adhesion. Negatively regulates IL-6 responses through direct interaction with SOCS3 thereby preventing constitutive IL-6 signaling. Alternatively, inhibition of IL-6 signaling can also occur via interaction and stabilization of DECTIN1/CLEC7A at the cell membrane to inhibit its ability to promote the production of IL-6. This chain is Leukocyte antigen CD37 (Cd37), found in Rattus norvegicus (Rat).